The following is a 953-amino-acid chain: Translation initiation factor IF-2 (953 aa).

Disordered regions lie at residues 52–247 and 279–363; these read KASK…LAEL and TKLK…TERK. 3 stretches are compositionally biased toward basic and acidic residues: residues 80–89, 98–111, and 140–188; these read TGSEHVEKTQ, FKAE…EQAA, and QGDK…ENHK. The span at 191–207 shows a compositional bias: polar residues; the sequence is RFTNQKKQGRQEPQSKS. Residues 229-247 show a composition bias toward basic and acidic residues; the sequence is RQSETRFRAQQEAKRLAEL. Polar residues predominate over residues 282 to 291; the sequence is KSSNISAKST. Basic and acidic residues predominate over residues 300–317; it reads ARPEKNRELTHHSQEGQK. A compositionally biased stretch (low complexity) spans 322–338; sequence SWNSQNQVRNQKNSNWN. The span at 339-348 shows a compositional bias: basic residues; sequence KNKKTKKGKN. The region spanning 454–623 is the tr-type G domain; it reads ERAPVVTIMG…LLVAEVEELK (170 aa). The interval 463–470 is G1; the sequence is GHVDHGKT. 463–470 lines the GTP pocket; that stretch reads GHVDHGKT. Residues 488–492 are G2; the sequence is GITQH. The segment at 509 to 512 is G3; the sequence is DTPG. Residues 509 to 513 and 563 to 566 contribute to the GTP site; these read DTPGH and NKID. The segment at 563–566 is G4; it reads NKID. Residues 599–601 form a G5 region; that stretch reads SAK.

Belongs to the TRAFAC class translation factor GTPase superfamily. Classic translation factor GTPase family. IF-2 subfamily.

It is found in the cytoplasm. Its function is as follows. One of the essential components for the initiation of protein synthesis. Protects formylmethionyl-tRNA from spontaneous hydrolysis and promotes its binding to the 30S ribosomal subunits. Also involved in the hydrolysis of GTP during the formation of the 70S ribosomal complex. The sequence is that of Translation initiation factor IF-2 from Streptococcus pyogenes serotype M5 (strain Manfredo).